We begin with the raw amino-acid sequence, 364 residues long: tRNA-specific 2-thiouridylase MnmA 1 (364 aa).

ATP-binding positions include 10–17 (GMSGGVDS) and methionine 36. Residue cysteine 106 is the Nucleophile of the active site. Cysteine 106 and cysteine 204 form a disulfide bridge. Glycine 130 contacts ATP. Residues 154-156 (KDQ) form an interaction with tRNA region. The active-site Cysteine persulfide intermediate is cysteine 204. The segment at 310–311 (RY) is interaction with tRNA.

This sequence belongs to the MnmA/TRMU family.

Its subcellular location is the cytoplasm. The catalysed reaction is S-sulfanyl-L-cysteinyl-[protein] + uridine(34) in tRNA + AH2 + ATP = 2-thiouridine(34) in tRNA + L-cysteinyl-[protein] + A + AMP + diphosphate + H(+). In terms of biological role, catalyzes the 2-thiolation of uridine at the wobble position (U34) of tRNA, leading to the formation of s(2)U34. The chain is tRNA-specific 2-thiouridylase MnmA 1 from Thermoanaerobacter pseudethanolicus (strain ATCC 33223 / 39E) (Clostridium thermohydrosulfuricum).